The following is a 260-amino-acid chain: Dolichol-phosphate mannosyltransferase subunit 1 (260 aa).

A disordered region spans residues 1-20 (MAAEEASRSSPRFRREPKGR). Ala2 is modified (N-acetylalanine). At Ser9 the chain carries Phosphoserine. GDP-alpha-D-mannose-binding residues include Pro32, Tyr34, Glu36, Ile63, Asp65, Asp118, Ala119, Asp120, Arg147, Arg234, and Lys240. Asp120 is a Mg(2+) binding site. Asp120 is a Mn(2+) binding site.

Belongs to the glycosyltransferase 2 family. In terms of assembly, component of the dolichol-phosphate mannose (DPM) synthase complex composed of DPM1, DPM2 and DPM3; within the complex, directly interacts with DPM3. This interaction may stabilize DPM1. It depends on Mg(2+) as a cofactor. Mn(2+) serves as cofactor. The cofactor is Ca(2+).

The protein resides in the endoplasmic reticulum. The enzyme catalyses a di-trans,poly-cis-dolichyl phosphate + GDP-alpha-D-mannose = a di-trans,poly-cis-dolichyl beta-D-mannosyl phosphate + GDP. Its pathway is protein modification; protein glycosylation. Functionally, transfers mannose from GDP-mannose to dolichol monophosphate to form dolichol phosphate mannose (Dol-P-Man) which is the mannosyl donor in pathways leading to N-glycosylation, glycosyl phosphatidylinositol membrane anchoring, and O-mannosylation of proteins; catalytic subunit of the dolichol-phosphate mannose (DPM) synthase complex. The sequence is that of Dolichol-phosphate mannosyltransferase subunit 1 (DPM1) from Bos taurus (Bovine).